Consider the following 517-residue polypeptide: T-complex protein 11-like protein 2 (517 aa).

Residues 1-59 (MPFNGEKQCVSEDQQSDSESSRFAEGVASLSDYECSRQSFTSDSSSKSSSPASTSPPRG) are disordered. Residue S16 is modified to Phosphoserine. The span at 36–55 (SRQSFTSDSSSKSSSPASTS) shows a compositional bias: low complexity.

It belongs to the TCP11 family. Interacts with FMNL2; this interaction promotes muscle-derived satellite cell (MDSC) migration and differentiation.

It is found in the cytoplasm. The protein localises to the cytoskeleton. In terms of biological role, promotes the migration of muscle-derived satellite cells (MDSCs) during differentiation throught interaction with FMNL2 and therefore may participate in microfilament assembly. The polypeptide is T-complex protein 11-like protein 2 (Mus musculus (Mouse)).